Reading from the N-terminus, the 638-residue chain is Cell division control protein 45 homolog (638 aa).

The segment at 151-204 (ELSDEENSDSSNEREEEVEDDNRSVESYSSSDYQARSRRRFSEETTQRRAEIKE) is disordered. Acidic residues predominate over residues 153–170 (SDEENSDSSNEREEEVED). Residues 190–204 (RFSEETTQRRAEIKE) are compositionally biased toward basic and acidic residues.

This sequence belongs to the CDC45 family. Interacts with sld3.

It is found in the nucleus. Required for initiation of chromosomal DNA replication. May have a role in regulating the MCM proteins nda1 and nda4. The chain is Cell division control protein 45 homolog (sna41) from Schizosaccharomyces pombe (strain 972 / ATCC 24843) (Fission yeast).